The following is a 353-amino-acid chain: Histidinol-phosphate aminotransferase (353 aa).

At K211 the chain carries N6-(pyridoxal phosphate)lysine.

This sequence belongs to the class-II pyridoxal-phosphate-dependent aminotransferase family. Histidinol-phosphate aminotransferase subfamily. As to quaternary structure, homodimer. Pyridoxal 5'-phosphate is required as a cofactor.

The catalysed reaction is L-histidinol phosphate + 2-oxoglutarate = 3-(imidazol-4-yl)-2-oxopropyl phosphate + L-glutamate. It functions in the pathway amino-acid biosynthesis; L-histidine biosynthesis; L-histidine from 5-phospho-alpha-D-ribose 1-diphosphate: step 7/9. This chain is Histidinol-phosphate aminotransferase, found in Klebsiella pneumoniae subsp. pneumoniae (strain ATCC 700721 / MGH 78578).